The following is a 100-amino-acid chain: C-X-C motif chemokine 3 (100 aa).

The signal sequence occupies residues 1 to 31 (MAPPTCRLLSAALVLLLLLATNHQATGAVVA). Intrachain disulfides connect cysteine 36–cysteine 62 and cysteine 38–cysteine 78.

Belongs to the intercrine alpha (chemokine CxC) family.

The protein localises to the secreted. Functionally, ligand for CXCR2. Has chemotactic activity for neutrophils. May play a role in inflammation and exert its effects on endothelial cells in an autocrine fashion. This chain is C-X-C motif chemokine 3, found in Mus musculus (Mouse).